Consider the following 65-residue polypeptide: MVSVQVNENESIDKLLKRFKKKYERAGVLKEFRKKAYFVKPSIEKRLKRSRSKRRAQRANEERNS.

The span at 46–57 (RLKRSRSKRRAQ) shows a compositional bias: basic residues. A disordered region spans residues 46 to 65 (RLKRSRSKRRAQRANEERNS).

It belongs to the bacterial ribosomal protein bS21 family.

This Chlorobaculum tepidum (strain ATCC 49652 / DSM 12025 / NBRC 103806 / TLS) (Chlorobium tepidum) protein is Small ribosomal subunit protein bS21.